Consider the following 342-residue polypeptide: Thiosulfate/3-mercaptopyruvate sulfurtransferase 2 (342 aa).

Rhodanese domains are found at residues 56-173 and 224-338; these read GDAD…DVES and EDKT…LPIV. Cys298 serves as the catalytic Cysteine persulfide intermediate.

As to expression, expressed in roots, rosette and cauline leaves, stems, flowers and siliques.

It localises to the cytoplasm. It carries out the reaction thiosulfate + hydrogen cyanide = thiocyanate + sulfite + 2 H(+). The catalysed reaction is 2-oxo-3-sulfanylpropanoate + [thioredoxin]-dithiol = [thioredoxin]-disulfide + hydrogen sulfide + pyruvate + H(+). Catalyzes the transfer of a sulfur ion from a donor to cyanide or to other thiol compounds. Substrate preference is 3-mercaptopyruvate &gt; thiosulfate. Involved in embryo and seed development. The polypeptide is Thiosulfate/3-mercaptopyruvate sulfurtransferase 2 (STR2) (Arabidopsis thaliana (Mouse-ear cress)).